We begin with the raw amino-acid sequence, 98 residues long: Peptide YY (98 aa).

A signal peptide spans 1-28 (MVAVRRPWPVTVAMLLILLACLGALVDA). A Phosphoserine modification is found at Ser41. Tyr64 is subject to Tyrosine amide. The propeptide occupies 68–98 (DVPAALFSKLLFTDDSDSENLPFRPEGLDQW).

This sequence belongs to the NPY family. Post-translationally, the peptide YY form is cleaved at Pro-30 by the prolyl endopeptidase FAP (seprase) activity (in vitro) to generate peptide YY(3-36).

The protein localises to the secreted. Functionally, this gut peptide inhibits exocrine pancreatic secretion, has a vasoconstrictory action and inhibitis jejunal and colonic mobility. The sequence is that of Peptide YY (Pyy) from Mus musculus (Mouse).